The chain runs to 89 residues: Large ribosomal subunit protein bL31B (89 aa).

Belongs to the bacterial ribosomal protein bL31 family. Type B subfamily. Part of the 50S ribosomal subunit.

In Haemophilus ducreyi (strain 35000HP / ATCC 700724), this protein is Large ribosomal subunit protein bL31B.